Reading from the N-terminus, the 125-residue chain is Large ribosomal subunit protein bL12 (125 aa).

This sequence belongs to the bacterial ribosomal protein bL12 family. In terms of assembly, homodimer. Part of the ribosomal stalk of the 50S ribosomal subunit. Forms a multimeric L10(L12)X complex, where L10 forms an elongated spine to which 2 to 4 L12 dimers bind in a sequential fashion. Binds GTP-bound translation factors.

Functionally, forms part of the ribosomal stalk which helps the ribosome interact with GTP-bound translation factors. Is thus essential for accurate translation. This is Large ribosomal subunit protein bL12 from Mannheimia succiniciproducens (strain KCTC 0769BP / MBEL55E).